The primary structure comprises 43 residues: Phi-Lf prophage-derived putative minor coat protein (43 aa).

In Xanthomonas campestris pv. campestris (strain ATCC 33913 / DSM 3586 / NCPPB 528 / LMG 568 / P 25), this protein is Phi-Lf prophage-derived putative minor coat protein (gVII-1).